The chain runs to 1108 residues: Isoleucine--tRNA ligase (1108 aa).

The short motif at 53–63 is the 'HIGH' region element; sequence PFANGLPHYGH. Residues 654 to 658 carry the 'KMSKS' region motif; sequence KLSKR. Residue lysine 657 coordinates ATP.

It belongs to the class-I aminoacyl-tRNA synthetase family. IleS type 2 subfamily. In terms of assembly, monomer. It depends on Zn(2+) as a cofactor.

It localises to the cytoplasm. It carries out the reaction tRNA(Ile) + L-isoleucine + ATP = L-isoleucyl-tRNA(Ile) + AMP + diphosphate. Its function is as follows. Catalyzes the attachment of isoleucine to tRNA(Ile). As IleRS can inadvertently accommodate and process structurally similar amino acids such as valine, to avoid such errors it has two additional distinct tRNA(Ile)-dependent editing activities. One activity is designated as 'pretransfer' editing and involves the hydrolysis of activated Val-AMP. The other activity is designated 'posttransfer' editing and involves deacylation of mischarged Val-tRNA(Ile). This Rickettsia bellii (strain RML369-C) protein is Isoleucine--tRNA ligase.